The chain runs to 178 residues: 2-C-methyl-D-erythritol 2,4-cyclodiphosphate synthase (178 aa).

D24, H26, and H61 together coordinate a divalent metal cation. 24–26 (DSH) lines the 4-CDP-2-C-methyl-D-erythritol 2-phosphate pocket. Residue 150 to 153 (TSGE) participates in 4-CDP-2-C-methyl-D-erythritol 2-phosphate binding.

The protein belongs to the IspF family. In terms of assembly, homotrimer. Requires a divalent metal cation as cofactor.

The catalysed reaction is 4-CDP-2-C-methyl-D-erythritol 2-phosphate = 2-C-methyl-D-erythritol 2,4-cyclic diphosphate + CMP. Its pathway is isoprenoid biosynthesis; isopentenyl diphosphate biosynthesis via DXP pathway; isopentenyl diphosphate from 1-deoxy-D-xylulose 5-phosphate: step 4/6. In terms of biological role, involved in the biosynthesis of isopentenyl diphosphate (IPP) and dimethylallyl diphosphate (DMAPP), two major building blocks of isoprenoid compounds. Catalyzes the conversion of 4-diphosphocytidyl-2-C-methyl-D-erythritol 2-phosphate (CDP-ME2P) to 2-C-methyl-D-erythritol 2,4-cyclodiphosphate (ME-CPP) with a corresponding release of cytidine 5-monophosphate (CMP). This Chlamydia trachomatis serovar L2b (strain UCH-1/proctitis) protein is 2-C-methyl-D-erythritol 2,4-cyclodiphosphate synthase.